Reading from the N-terminus, the 753-residue chain is Probable phosphoenolpyruvate synthase (753 aa).

Residue His398 is the Tele-phosphohistidine intermediate of the active site. The substrate site is built by Arg488, Arg535, Glu631, Gly653, Thr654, Asn655, and Asp656. Glu631 lines the Mg(2+) pocket. Asp656 contacts Mg(2+). The active-site Proton donor is the Cys703.

This sequence belongs to the PEP-utilizing enzyme family. Mg(2+) is required as a cofactor.

It catalyses the reaction pyruvate + ATP + H2O = phosphoenolpyruvate + AMP + phosphate + 2 H(+). It participates in carbohydrate biosynthesis; gluconeogenesis. Functionally, catalyzes the phosphorylation of pyruvate to phosphoenolpyruvate. In Archaeoglobus fulgidus (strain ATCC 49558 / DSM 4304 / JCM 9628 / NBRC 100126 / VC-16), this protein is Probable phosphoenolpyruvate synthase (ppsA).